Consider the following 113-residue polypeptide: Ig heavy chain V-III region ABE-47N (113 aa).

The Ig-like domain occupies 1-113 (EVKLEESGGG…YWGQGTLVTV (113 aa)). Cys22 and Cys98 are disulfide-bonded.

The chain is Ig heavy chain V-III region ABE-47N from Mus musculus (Mouse).